The chain runs to 395 residues: Zinc-regulated GTPase metalloprotein activator 1E (395 aa).

The interval methionine 1–leucine 22 is disordered. A compositionally biased stretch (acidic residues) spans valine 8–proline 20. The psi-PxLVp motif signature appears at glutamate 17–proline 24. Glycine 49–threonine 56 serves as a coordination point for GTP. Zn(2+) is bound by residues cysteine 107, cysteine 109, and cysteine 110. The CXCC motif signature appears at cysteine 107–cysteine 110. GTP is bound by residues cysteine 110 to aspartate 114 and asparagine 203 to aspartate 206. One can recognise a CobW C-terminal domain in the interval isoleucine 274 to valine 377.

This sequence belongs to the SIMIBI class G3E GTPase family. ZNG1 subfamily.

Its subcellular location is the nucleus. The catalysed reaction is GTP + H2O = GDP + phosphate + H(+). Zinc chaperone that directly transfers zinc cofactor to target metalloproteins, thereby activating them. Catalyzes zinc insertion into the active site of methionine aminopeptidase METAP1, which function to cleave the initiator methionine from polypeptides during or after protein translation. Mechanistically, the N-terminal psi-PxLVp motif binds to the C6H2-type zinc finger of inactive form of METAP1. After formation of the docked complex, zinc is transferred from the CXCC motif in the GTPase domain of ZNG1E to the zinc binding site in the peptidase domain of METAP1 in a process requiring GTP hydrolysis. GTP/GDP exchange is required for release of active METAP1. The sequence is that of Zinc-regulated GTPase metalloprotein activator 1E from Homo sapiens (Human).